Consider the following 653-residue polypeptide: PAN2-PAN3 deadenylation complex subunit PAN3 (653 aa).

Disordered stretches follow at residues 1 to 21 and 45 to 128; these read MASD…ENAK and HDPN…AAPD. The C3H1-type zinc-finger motif lies at 19–48; that stretch reads NAKDTLCRNVTIYGRCRYEDKGCVYNHDPN. A compositionally biased stretch (low complexity) spans 68–95; sequence SFTPSLLSSNGSSPTSSSATLKKTTTIS. Residues 108–119 are compositionally biased toward polar residues; the sequence is GISSRSNASTPS. The tract at residues 256 to 516 is pseudokinase domain; the sequence is QTLPNTQLPA…TIDIFITGIS (261 aa). Residues Arg-308, 357 to 364, and 416 to 417 each bind ATP; these read DYHPLSKT and SK. A coiled-coil region spans residues 517-555; sequence SQLMSTFDSALHMDDQLTSDLSRELENGRLVRLMTKLNF. The knob domain stretch occupies residues 556–653; that stretch reads INERPEYEHD…ALLKPTRRVH (98 aa).

Belongs to the protein kinase superfamily. PAN3 family. Homodimer. Forms a heterotrimer with a catalytic subunit pan2 to form the poly(A)-nuclease (PAN) deadenylation complex. Interacts (via PAM-2 motif) with poly(A)-binding protein pab1 (via PABC domain), conferring substrate specificity of the enzyme complex.

The protein localises to the cytoplasm. Its function is as follows. Regulatory subunit of the poly(A)-nuclease (PAN) deadenylation complex, one of two cytoplasmic mRNA deadenylases involved in mRNA turnover. PAN specifically shortens poly(A) tails of RNA and the activity is stimulated by poly(A)-binding protein pab1. PAN deadenylation is followed by rapid degradation of the shortened mRNA tails by the CCR4-NOT complex. Deadenylated mRNAs are then degraded by two alternative mechanisms, namely exosome-mediated 3'-5' exonucleolytic degradation, or deadenylation-dependent mRNA decaping and subsequent 5'-3' exonucleolytic degradation by xrn1. May also be involved in post-transcriptional maturation of mRNA poly(A) tails. pan3 acts as a positive regulator for PAN activity, recruiting the catalytic subunit pan2 to mRNA via its interaction with RNA and with pab1. This Aspergillus terreus (strain NIH 2624 / FGSC A1156) protein is PAN2-PAN3 deadenylation complex subunit PAN3.